The primary structure comprises 307 residues: Protein YIF1A (307 aa).

The disordered stretch occupies residues 1-42 (MNFQQQGYRATKPRARASPPTGGPMLFDDTSSGPPPMNNQNY). Topologically, residues 1–148 (MNFQQQGYRA…TPRHDVNAPD (148 aa)) are cytoplasmic. A helical membrane pass occupies residues 149 to 169 (LYIPTMAFITYILLAGMALGI). Over 170–184 (QKRFSPEVLGLCAST) the chain is Lumenal. A helical membrane pass occupies residues 185-205 (ALVWMIIEVLVMLLSLYLLTV). The Cytoplasmic segment spans residues 206 to 213 (HTDLSTFD). A helical membrane pass occupies residues 214 to 236 (LVAYSGYKYVGMILTVFCGLLFG). Over 237 to 239 (SDG) the chain is Lumenal. Residues 240–259 (YYVALAWSSCALMFFIVRSL) form a helical membrane-spanning segment. Residues 260–285 (KMKILSSISADSMGAGASAKPRFRLY) are Cytoplasmic-facing. Residues 286-306 (ITVASAAFQPFIIYWLTAHLV) traverse the membrane as a helical segment.

It belongs to the YIF1 family.

It localises to the endoplasmic reticulum membrane. Its subcellular location is the golgi apparatus membrane. The protein localises to the endoplasmic reticulum-Golgi intermediate compartment membrane. Functionally, possible role in transport between endoplasmic reticulum and Golgi. In Danio rerio (Zebrafish), this protein is Protein YIF1A (yif1a).